Reading from the N-terminus, the 415-residue chain is uncharacterized protein (415 aa).

Residues cysteine 66, cysteine 72, cysteine 75, and cysteine 149 each coordinate [4Fe-4S] cluster. Positions 249, 276, 296, and 344 each coordinate S-adenosyl-L-methionine. Cysteine 370 acts as the Nucleophile in catalysis.

This sequence belongs to the class I-like SAM-binding methyltransferase superfamily. RNA M5U methyltransferase family.

This is an uncharacterized protein from Brucella melitensis biotype 1 (strain ATCC 23456 / CCUG 17765 / NCTC 10094 / 16M).